Here is a 114-residue protein sequence, read N- to C-terminus: Fatty acid-binding protein, liver (114 aa).

It belongs to the calycin superfamily. Fatty-acid binding protein (FABP) family. In terms of processing, the N-terminus is blocked.

The protein localises to the cytoplasm. FABPs are thought to play a role in the intracellular transport of long-chain fatty acids and their acyl-CoA esters. The sequence is that of Fatty acid-binding protein, liver from Lethenteron camtschaticum (Japanese lamprey).